Here is a 164-residue protein sequence, read N- to C-terminus: UPF0304 protein ECA3037 (164 aa).

The protein belongs to the UPF0304 family.

This Pectobacterium atrosepticum (strain SCRI 1043 / ATCC BAA-672) (Erwinia carotovora subsp. atroseptica) protein is UPF0304 protein ECA3037.